A 643-amino-acid chain; its full sequence is 1-deoxy-D-xylulose-5-phosphate synthase (643 aa).

Residues His-78 and 119 to 121 (AHS) each bind thiamine diphosphate. Residue Asp-150 participates in Mg(2+) binding. Thiamine diphosphate contacts are provided by residues 151-152 (GS), Asn-179, Tyr-288, and Glu-370. Mg(2+) is bound at residue Asn-179.

This sequence belongs to the transketolase family. DXPS subfamily. Homodimer. It depends on Mg(2+) as a cofactor. Thiamine diphosphate serves as cofactor.

The enzyme catalyses D-glyceraldehyde 3-phosphate + pyruvate + H(+) = 1-deoxy-D-xylulose 5-phosphate + CO2. The protein operates within metabolic intermediate biosynthesis; 1-deoxy-D-xylulose 5-phosphate biosynthesis; 1-deoxy-D-xylulose 5-phosphate from D-glyceraldehyde 3-phosphate and pyruvate: step 1/1. Its function is as follows. Catalyzes the acyloin condensation reaction between C atoms 2 and 3 of pyruvate and glyceraldehyde 3-phosphate to yield 1-deoxy-D-xylulose-5-phosphate (DXP). The chain is 1-deoxy-D-xylulose-5-phosphate synthase from Brucella canis (strain ATCC 23365 / NCTC 10854 / RM-666).